The primary structure comprises 689 residues: Protein asunder (689 aa).

Residues 521–550 (NGARLKLSKAKDQYRLLYRELEQLIQLNAT) adopt a coiled-coil conformation. 2 disordered regions span residues 592 to 619 (PERL…SKRR) and 665 to 689 (GTKD…SVRS). Over residues 599–614 (SSVGASGSSSSNSLLK) the composition is skewed to low complexity. The short motif at 613–619 (LKASKRR) is the Nuclear localization signal (NLS) element.

Belongs to the Integrator subunit 13 family. As to quaternary structure, belongs to the multiprotein complex Integrator, at least composed of IntS1, IntS2, IntS3, IntS4, omd/IntS5, IntS6, defl/IntS7, IntS8, IntS9, IntS10, IntS11, IntS12, asun/IntS13, IntS14 and IntS15. The core complex associates with protein phosphatase 2A subunits mts/PP2A and Pp2A-29B, to form the Integrator-PP2A (INTAC) complex. In terms of processing, phosphorylated. Expressed in nurse cells at stages 9-10 of oogenesis and exported to the oocyte. Also expressed in the follicle cells surrounding the oocyte.

It localises to the nucleus. The protein resides in the cytoplasm. It is found in the perinuclear region. Functionally, component of the integrator complex, a multiprotein complex that terminates RNA polymerase II (Pol II) transcription in the promoter-proximal region of genes. The integrator complex provides a quality checkpoint during transcription elongation by driving premature transcription termination of transcripts that are unfavorably configured for transcriptional elongation: the complex terminates transcription by (1) catalyzing dephosphorylation of the C-terminal domain (CTD) of Pol II subunit Polr2A/Rbp1 and Spt5, and (2) degrading the exiting nascent RNA transcript via endonuclease activity. The integrator complex is also involved in the 3'-end processing of the U7 snRNA, and also the spliceosomal snRNAs U1, U2, U4 and U5. Plays a role as a regulator of spermatogenesis. Crucial regulator of the mitotic cell cycle and development. Required for the correct dynein-dynactin perinuclear localization important for nucleus-centrosome coupling that occur upon meiotic progression of primary spermatocytes. Plays a role in sperm motility and fertility. May have a role in the PNG/PLU/GNU pathway. This Drosophila melanogaster (Fruit fly) protein is Protein asunder.